The following is a 123-amino-acid chain: Small ribosomal subunit protein uS12c (123 aa).

Belongs to the universal ribosomal protein uS12 family. As to quaternary structure, part of the 30S ribosomal subunit.

The protein localises to the plastid. Its subcellular location is the chloroplast. With S4 and S5 plays an important role in translational accuracy. Located at the interface of the 30S and 50S subunits. The sequence is that of Small ribosomal subunit protein uS12c (rps12) from Chlorella vulgaris (Green alga).